The chain runs to 775 residues: MHKNSLLGQIIYTSIMSAVLLMACLEWFLWLAAFLYCLVKVFQKSEHWSINVLCIIVGTAFVLLRVIFLPIMVVTLPLPDAIAKLWPEEMVSFLQWFAFWAFAILLTVPWLFCIYQVVTNQLGRTKRMKQVLDDVTAPKVVIVMPCYREEPEVLIKAINSVVDCDYPPSCIHVFLSFDGEEEDNLYLNTISQLGVLLKTESHPRSIDVKYRSARVTISRFPHGGKRHCQKVTFKLIDRVYEEYLKRNDNLFILFIDSDCILDKVCLQNFVYDMELSPGNTGEMLAMTGVITSTTKKHSIITLLQDMEYIHGQLFERTVESGCGSVTCLPGALTMLRFSAFRRMAKYYFVDKAEQCEDLFDFAKCHLGEDRWLTHLFMIGAKKRHQIQMCTSAFCKTEAVQSTRSLVKQRRRWFLGFITNEVCMLTDWRLWKRYPILILVRFMQNTIRTTALLFFVMVLAIMTTVKKVDDLPVGFIAISLGLNWMLMLYFGAKLRRFKIWLYPLMFILNPFYNWYYMVYGIFTAGQRTWGGPRADAAAADSHTTAREAAEQAEKQGDELNVVPETFKAAHEARRAASNRESTTTSELGRTKSVIRPPGKIDGKFSARQKTASGMYAHPDEMDISANDVEKGRRGTRGFFADRDSLDSISSAQNIDLGVSTPRRMKLLMNEEDLRKYQLGQQIQNRNSGIDDAEGIYRQPIRTPSAFPHAHSASANDIPLHDLGANDTAAQGSRSEDIQRFSEGRGIGTRADNGRSRNVGNSSFASRMAKRTPKTSR.

6 consecutive transmembrane segments (helical) span residues 19–39, 54–74, 94–114, 441–461, 470–490, and 498–518; these read VLLM…YCLV, CIIV…IMVV, LQWF…LFCI, FMQN…LAIM, LPVG…LYFG, and IWLY…YMVY. Residues 532–541 are compositionally biased toward low complexity; sequence RADAAAADSH. Disordered regions lie at residues 532–603 and 702–775; these read RADA…DGKF and PSAF…KTSR. Basic and acidic residues predominate over residues 542 to 556; it reads TTAREAAEQAEKQGD. Over residues 577–586 the composition is skewed to polar residues; that stretch reads NRESTTTSEL. A compositionally biased stretch (low complexity) spans 702-713; that stretch reads PSAFPHAHSASA. N-linked (GlcNAc...) asparagine glycosylation is present at Asn-724. A compositionally biased stretch (basic and acidic residues) spans 732–741; it reads RSEDIQRFSE. Over residues 754–763 the composition is skewed to polar residues; it reads SRNVGNSSFA. Asn-759 is a glycosylation site (N-linked (GlcNAc...) asparagine). Basic residues predominate over residues 766 to 775; it reads MAKRTPKTSR.

This sequence belongs to the chitin synthase family. Class VII subfamily.

Its subcellular location is the cell membrane. The enzyme catalyses [(1-&gt;4)-N-acetyl-beta-D-glucosaminyl](n) + UDP-N-acetyl-alpha-D-glucosamine = [(1-&gt;4)-N-acetyl-beta-D-glucosaminyl](n+1) + UDP + H(+). Polymerizes chitin, a structural polymer of the cell wall and septum, by transferring the sugar moiety of UDP-GlcNAc to the non-reducing end of the growing chitin polymer. Shows additive effects in septum formation with CHS1, CHS2, CHS3A, CHS4, CHS5 and CHS7. Involved in virulence and mediates mycotoxin deoxinivalenol (DON) biosynthesis via the regulation of the expression of TRI4, TRI5 and TRI6. In Gibberella zeae (strain ATCC MYA-4620 / CBS 123657 / FGSC 9075 / NRRL 31084 / PH-1) (Wheat head blight fungus), this protein is Chitin synthase 6.